A 195-amino-acid chain; its full sequence is Recombination protein RecR (195 aa).

The C4-type zinc-finger motif lies at C53 to C68. One can recognise a Toprim domain in the interval S76–P171.

It belongs to the RecR family.

May play a role in DNA repair. It seems to be involved in an RecBC-independent recombinational process of DNA repair. It may act with RecF and RecO. This chain is Recombination protein RecR, found in Anaplasma marginale (strain St. Maries).